The primary structure comprises 76 residues: Pigment-dispersing hormone A peptides (76 aa).

Residues 1 to 20 (MRSAMVVLVLVAMVAVFTRA) form the signal peptide. Residue alanine 73 is modified to Alanine amide.

This sequence belongs to the arthropod PDH family. Optical ganglia of the eyestalk.

The protein localises to the secreted. In terms of biological role, the pigment-dispersing hormone causes the migration of the distal retinal pigment into the proximal end of the pigment chromatophore cells and thus decreases the amount of light entering the retinulas. May also function as a neurotransmitter and/or neuromodulator. In Faxonius limosus (Spinycheek crayfish), this protein is Pigment-dispersing hormone A peptides.